The primary structure comprises 178 residues: Ras-like protein (178 aa).

1-6 provides a ligand contact to GTP; sequence GGVGKS. The short motif at 21–29 is the Effector region element; sequence YDPTIEDSY. Residues 46-50 and 105-108 each bind GTP; these read DTAGQ and NKCD. Cys-175 carries the cysteine methyl ester modification. Cys-175 carries S-geranylgeranyl cysteine lipidation. Positions 176–178 are cleaved as a propeptide — removed in mature form; the sequence is SIL.

This sequence belongs to the small GTPase superfamily. Ras family.

It localises to the cell membrane. It carries out the reaction GTP + H2O = GDP + phosphate + H(+). Alternates between an inactive form bound to GDP and an active form bound to GTP. Activated by a guanine nucleotide-exchange factor (GEF) and inactivated by a GTPase-activating protein (GAP). Its function is as follows. Ras proteins bind GDP/GTP and possess intrinsic GTPase activity. This is Ras-like protein from Artemia salina (Brine shrimp).